A 581-amino-acid chain; its full sequence is Tail sheath protein (581 aa).

This sequence belongs to the myoviridae tail sheath protein family. Homomultimer.

Its subcellular location is the virion. It localises to the host cytoplasm. In terms of biological role, polymerizes as an extended structure around the baseplate-tail tube complex. During ejection, the sheath shifts to a contracted form, thereby making the inner tail tube protrude through the host cell envelope. In Mycobacterium phage Bxz1 (Mycobacteriophage Bxz1), this protein is Tail sheath protein.